Here is a 405-residue protein sequence, read N- to C-terminus: uncharacterized protein (405 aa).

3 disordered regions span residues 1–21 (MSKK…ESKT), 150–179 (IKDE…QEGP), and 285–405 (DDED…KSRS). The span at 7–16 (KNASPKNNSD) shows a compositional bias: polar residues. 2 stretches are compositionally biased toward acidic residues: residues 312–331 (SDDE…DDEE) and 349–358 (DDEDDEEEGE). Composition is skewed to basic residues over residues 365–374 (SSKKSSKKAS) and 390–405 (PKKK…KSRS).

This is an uncharacterized protein from Acanthamoeba polyphaga (Amoeba).